The sequence spans 263 residues: Endonuclease 8 (263 aa).

The active-site Schiff-base intermediate with DNA is the P2. E3 functions as the Proton donor in the catalytic mechanism. The active-site Proton donor; for beta-elimination activity is K53. Q70, R125, and N169 together coordinate DNA. The FPG-type zinc finger occupies 229 to 263; sequence KVFHREGKACERCGGVIERSTLSSRPFYGCPVCQK. R253 (proton donor; for delta-elimination activity) is an active-site residue.

It belongs to the FPG family. Zn(2+) serves as cofactor.

It catalyses the reaction 2'-deoxyribonucleotide-(2'-deoxyribose 5'-phosphate)-2'-deoxyribonucleotide-DNA = a 3'-end 2'-deoxyribonucleotide-(2,3-dehydro-2,3-deoxyribose 5'-phosphate)-DNA + a 5'-end 5'-phospho-2'-deoxyribonucleoside-DNA + H(+). In terms of biological role, involved in base excision repair of DNA damaged by oxidation or by mutagenic agents. Acts as a DNA glycosylase that recognizes and removes damaged bases. Has a preference for oxidized pyrimidines, such as thymine glycol, 5,6-dihydrouracil and 5,6-dihydrothymine. Has AP (apurinic/apyrimidinic) lyase activity and introduces nicks in the DNA strand. Cleaves the DNA backbone by beta-delta elimination to generate a single-strand break at the site of the removed base with both 3'- and 5'-phosphates. In Enterobacter sp. (strain 638), this protein is Endonuclease 8.